The following is a 187-amino-acid chain: Hypoxanthine/guanine phosphoribosyltransferase (187 aa).

This sequence belongs to the purine/pyrimidine phosphoribosyltransferase family. Archaeal HPRT subfamily. As to quaternary structure, homodimer.

The protein localises to the cytoplasm. It catalyses the reaction IMP + diphosphate = hypoxanthine + 5-phospho-alpha-D-ribose 1-diphosphate. The enzyme catalyses GMP + diphosphate = guanine + 5-phospho-alpha-D-ribose 1-diphosphate. The protein operates within purine metabolism; IMP biosynthesis via salvage pathway; IMP from hypoxanthine: step 1/1. In terms of biological role, catalyzes a salvage reaction resulting in the formation of IMP that is energically less costly than de novo synthesis. The polypeptide is Hypoxanthine/guanine phosphoribosyltransferase (Methanococcus voltae (strain ATCC BAA-1334 / A3)).